The sequence spans 334 residues: Small ribosomal subunit protein uS2 (334 aa).

The protein belongs to the universal ribosomal protein uS2 family.

The chain is Small ribosomal subunit protein uS2 from Xanthobacter autotrophicus (strain ATCC BAA-1158 / Py2).